Consider the following 262-residue polypeptide: Indole-3-glycerol phosphate synthase (262 aa).

This sequence belongs to the TrpC family.

It carries out the reaction 1-(2-carboxyphenylamino)-1-deoxy-D-ribulose 5-phosphate + H(+) = (1S,2R)-1-C-(indol-3-yl)glycerol 3-phosphate + CO2 + H2O. It functions in the pathway amino-acid biosynthesis; L-tryptophan biosynthesis; L-tryptophan from chorismate: step 4/5. The protein is Indole-3-glycerol phosphate synthase of Bordetella bronchiseptica (strain ATCC BAA-588 / NCTC 13252 / RB50) (Alcaligenes bronchisepticus).